The sequence spans 411 residues: Serine hydroxymethyltransferase (411 aa).

(6S)-5,6,7,8-tetrahydrofolate-binding positions include L117 and 121–123 (GHL). Residue K226 is modified to N6-(pyridoxal phosphate)lysine. (6S)-5,6,7,8-tetrahydrofolate-binding positions include E241 and 349-351 (SPF).

The protein belongs to the SHMT family. As to quaternary structure, homodimer. Pyridoxal 5'-phosphate serves as cofactor.

Its subcellular location is the cytoplasm. It carries out the reaction (6R)-5,10-methylene-5,6,7,8-tetrahydrofolate + glycine + H2O = (6S)-5,6,7,8-tetrahydrofolate + L-serine. It functions in the pathway one-carbon metabolism; tetrahydrofolate interconversion. Its pathway is amino-acid biosynthesis; glycine biosynthesis; glycine from L-serine: step 1/1. Functionally, catalyzes the reversible interconversion of serine and glycine with tetrahydrofolate (THF) serving as the one-carbon carrier. This reaction serves as the major source of one-carbon groups required for the biosynthesis of purines, thymidylate, methionine, and other important biomolecules. Also exhibits THF-independent aldolase activity toward beta-hydroxyamino acids, producing glycine and aldehydes, via a retro-aldol mechanism. This is Serine hydroxymethyltransferase from Macrococcus caseolyticus (strain JCSC5402) (Macrococcoides caseolyticum).